We begin with the raw amino-acid sequence, 175 residues long: Thermoresistant gluconokinase (175 aa).

15-22 serves as a coordination point for ATP; that stretch reads GVSGSGKS.

The protein belongs to the gluconokinase GntK/GntV family.

The enzyme catalyses D-gluconate + ATP = 6-phospho-D-gluconate + ADP + H(+). It participates in carbohydrate acid metabolism; D-gluconate degradation. The protein is Thermoresistant gluconokinase (gntK) of Escherichia coli (strain K12).